Consider the following 106-residue polypeptide: Putative regulatory protein MalR (106 aa).

One can recognise an HTH hxlR-type domain in the interval 12-106 (CSIEYTLSFM…NLMHKWGQEN (95 aa)).

Its function is as follows. Potential regulator of the malBH genes. The protein is Putative regulatory protein MalR (malR) of Fusobacterium mortiferum.